Reading from the N-terminus, the 202-residue chain is Probable cobalt-precorrin-6B C(15)-methyltransferase (decarboxylating) (202 aa).

S-adenosyl-L-methionine is bound by residues Thr-29, 53-57 (GCGSG), Asp-77, and Val-106.

This sequence belongs to the methyltransferase superfamily. Archaeal-type CbiT family.

The enzyme catalyses Co-precorrin-6B + S-adenosyl-L-methionine = Co-precorrin-7 + S-adenosyl-L-homocysteine + CO2. It functions in the pathway cofactor biosynthesis; adenosylcobalamin biosynthesis; cob(II)yrinate a,c-diamide from sirohydrochlorin (anaerobic route): step 8/10. In terms of biological role, catalyzes the methylation of C-15 in cobalt-precorrin-6B followed by the decarboxylation of C-12 to form cobalt-precorrin-7. This chain is Probable cobalt-precorrin-6B C(15)-methyltransferase (decarboxylating), found in Thermoplasma acidophilum (strain ATCC 25905 / DSM 1728 / JCM 9062 / NBRC 15155 / AMRC-C165).